The chain runs to 365 residues: Chorismate synthase (365 aa).

NADP(+) is bound at residue arginine 48. Residues 125-127 (RSS), 238-239 (NA), glycine 278, 293-297 (KPTSS), and arginine 319 contribute to the FMN site.

The protein belongs to the chorismate synthase family. As to quaternary structure, homotetramer. FMNH2 is required as a cofactor.

The enzyme catalyses 5-O-(1-carboxyvinyl)-3-phosphoshikimate = chorismate + phosphate. It functions in the pathway metabolic intermediate biosynthesis; chorismate biosynthesis; chorismate from D-erythrose 4-phosphate and phosphoenolpyruvate: step 7/7. In terms of biological role, catalyzes the anti-1,4-elimination of the C-3 phosphate and the C-6 proR hydrogen from 5-enolpyruvylshikimate-3-phosphate (EPSP) to yield chorismate, which is the branch point compound that serves as the starting substrate for the three terminal pathways of aromatic amino acid biosynthesis. This reaction introduces a second double bond into the aromatic ring system. This Marinomonas sp. (strain MWYL1) protein is Chorismate synthase.